The chain runs to 234 residues: tRNA1(Val) (adenine(37)-N6)-methyltransferase (234 aa).

The protein belongs to the methyltransferase superfamily. tRNA (adenine-N(6)-)-methyltransferase family.

The protein resides in the cytoplasm. It carries out the reaction adenosine(37) in tRNA1(Val) + S-adenosyl-L-methionine = N(6)-methyladenosine(37) in tRNA1(Val) + S-adenosyl-L-homocysteine + H(+). Functionally, specifically methylates the adenine in position 37 of tRNA(1)(Val) (anticodon cmo5UAC). The polypeptide is tRNA1(Val) (adenine(37)-N6)-methyltransferase (Flavobacterium psychrophilum (strain ATCC 49511 / DSM 21280 / CIP 103535 / JIP02/86)).